A 221-amino-acid chain; its full sequence is Late protein I196L (221 aa).

3 tandem repeats follow at residues 28-48 (SNYL…PTTS), 49-69 (SNYS…PTTS), and 70-90 (SNYS…PTTS). The stretch at 91–112 (SNYSMTAIPNNISDKEDYTYFS) is one 4; approximate repeat.

Belongs to the asfivirus I196L family.

The protein is Late protein I196L of African swine fever virus (isolate Tick/Malawi/Lil 20-1/1983) (ASFV).